Here is a 289-residue protein sequence, read N- to C-terminus: O-methyltransferase asqN (289 aa).

S-adenosyl-L-methionine is bound at residue aspartate 155. The active-site Proton acceptor is histidine 195.

Belongs to the class I-like SAM-binding methyltransferase superfamily. Cation-independent O-methyltransferase family.

The protein operates within secondary metabolite biosynthesis. It functions in the pathway alkaloid biosynthesis. It participates in mycotoxin biosynthesis. In terms of biological role, O-methyltransferase; part of the gene cluster that mediates the biosynthesis of the aspoquinolone mycotoxins. The role of asqN within the aspoquinolone pathway has still to be determined. The first step of the pathway is catalyzed by the nonribosomal peptide synthetase asqK that condenses anthranilic acid and O-methyl-L-tyrosine to produce 4'-methoxycyclopeptin. 4'-methoxycyclopeptin is then converted to 4'-methoxydehydrocyclopeptin by the ketoglutarate-dependent dioxygenase asqJ. AsqJ also converts its first product 4'-methoxydehydrocyclopeptin to 4'-methoxycyclopenin. The following conversion of 4'-methoxycyclopenin into 4'-methoxyviridicatin is catalyzed by the cyclopenase asqI. 4'-methoxyviridicatin is the precursor of quinolone natural products, and is further converted to quinolinone B. The prenyltransferase asqH1 then catalyzes the canonical Friedel-Crafts alkylation of quinolinone B with dimethylallyl cation to yield dimethylallyl quinolone, which is subjected to FAD-dependent dehydrogenation by the FAD-linked oxidoreductase asqF to yield conjugated aryl diene. The delta(3') double bond then serves as the site of the second alkylation with DMAPP catalyzed by the prenyltransferase asqH2 to yield a carbenium ion intermediate, which can be attacked by H(2)O to yield a styrenyl quinolone containing a C3'-hydroxyprenyl chain. The FAD-dependent monooxygenase asqG performs epoxidation of the terminal C7'-C8' olefin. Finally, after dehydratation of the epoxide at C3 by asqC, the quinolone epoxide rearrangement protein asqO catalyzes an enzymatic 3-exo-tet cyclization to yield the cyclopropyl-THF ring system in aspoquinolone. This chain is O-methyltransferase asqN, found in Emericella nidulans (strain FGSC A4 / ATCC 38163 / CBS 112.46 / NRRL 194 / M139) (Aspergillus nidulans).